The following is a 438-amino-acid chain: uncharacterized protein (438 aa).

2 disordered regions span residues 1-22 (MRDN…TYDP) and 156-264 (DTAK…PWRP). Basic and acidic residues predominate over residues 156 to 170 (DTAKSNEKLQGDESK). Low complexity predominate over residues 171 to 189 (SSNGSSSTSTTTQRGSTNS). A compositionally biased stretch (basic and acidic residues) spans 191–206 (TKVKALKIEVKKKSDS).

Belongs to the adhesin P1 family.

This is an uncharacterized protein from Mycoplasma pneumoniae (strain ATCC 29342 / M129 / Subtype 1) (Mycoplasmoides pneumoniae).